A 109-amino-acid polypeptide reads, in one-letter code: Flagellar hook-basal body complex protein FliE (109 aa).

The protein belongs to the FliE family.

Its subcellular location is the bacterial flagellum basal body. This chain is Flagellar hook-basal body complex protein FliE, found in Pseudomonas fluorescens (strain SBW25).